The chain runs to 925 residues: Serine/threonine-protein phosphatase 1 regulatory subunit 10 (925 aa).

The interval 1–348 is interaction with TOX4; that stretch reads MGSGPIDPKE…EPAPPSEAMD (348 aa). The 75-residue stretch at 73–147 folds into the TFIIS N-terminal domain; it reads KLLNNWLTYS…SDWMAVIRSQ (75 aa). Positions 147 to 211 are disordered; the sequence is QSSTQPAEKD…APSHAKFRST (65 aa). Composition is skewed to basic and acidic residues over residues 153 to 166 and 174 to 196; these read AEKD…EGKS and PLTE…EKPK. Glycyl lysine isopeptide (Lys-Gly) (interchain with G-Cter in SUMO2) cross-links involve residues lysine 179 and lysine 262. 3 disordered regions span residues 304-398, 536-555, and 587-890; these read KIKK…KRKT, TLEP…SKLP, and SIMG…HGGD. Serine 313 is modified (phosphoserine). Low complexity predominate over residues 325–336; it reads KTSTEPSTAKPS. The segment at 357–433 is necessary for interaction with PPP1CA; the sequence is PPVEVPELMD…NKIKDFGEAA (77 aa). Serine 382 is subject to Phosphoserine. The segment at 393-408 is necessary for interaction with PPP1CC; that stretch reads GRKRKTVTWPEEGKLR. Positions 394–423 match the PP1-binding motif motif; sequence RKRKTVTWPEEGKLREYFYFELDETERVNV. The residue at position 398 (threonine 398) is a Phosphothreonine; by PKA. The interaction with WDR82 stretch occupies residues 418–619; it reads TERVNVNKIK…IKQMLVPHGL (202 aa). Residues 540–551 show a composition bias toward gly residues; the sequence is GGAGGSPDGAGG. 2 positions are modified to phosphoserine: serine 545 and serine 591. Basic and acidic residues predominate over residues 596 to 611; it reads PSEELLKQPDYSDKIK. Positions 644–655 are enriched in pro residues; the sequence is PPGPGGPMPGPH. A compositionally biased stretch (gly residues) spans 656-665; it reads GGPGGPGGPV. Arginine 668 carries the omega-N-methylarginine modification. Positions 679–693 are enriched in low complexity; sequence GDPFWDGPGDPMRGG. 2 positions are modified to omega-N-methylarginine: arginine 696 and arginine 741. Gly residues-rich tracts occupy residues 728–766 and 775–829; these read ARGG…GMSS and GPGG…AGGG. Composition is skewed to basic and acidic residues over residues 846–871 and 879–890; these read PHDV…HDGP and RGHDGGHNHGGD. A C3H1-type zinc finger spans residues 891–919; sequence MSKRPVCRHFMMKGNCRYENNCAFYHPGV.

As to quaternary structure, component of the PNUTS-PP1 complex (also named PTW/PP1 complex), composed of PPP1R10/PNUTS, TOX4, WDR82, and PPP1CA (or PPP1CB or PPP1CC). Post-translationally, phosphorylated on Ser-398 by PKA within the region necessary for interaction with PPP1CA.

It is found in the nucleus. The protein localises to the chromosome. In terms of biological role, substrate-recognition component of the PNUTS-PP1 protein phosphatase complex, a protein phosphatase 1 (PP1) complex that promotes RNA polymerase II transcription pause-release, allowing transcription elongation. Promoter-proximal pausing by RNA polymerase II is a transcription halt following transcription initiation but prior to elongation, which acts as a checkpoint to control that transcripts are favorably configured for transcriptional elongation. The PNUTS-PP1 complex mediates the release of RNA polymerase II from promoter-proximal region of genes by catalyzing dephosphorylation of proteins involved in transcription, such as AFF4, CDK9, MEPCE, INTS12, NCBP1, POLR2M/GDOWN1 and SUPT6H. The PNUTS-PP1 complex also regulates RNA polymerase II transcription termination by mediating dephosphorylation of SUPT5H in termination zones downstream of poly(A) sites, thereby promoting deceleration of RNA polymerase II transcription. PNUTS-PP1 complex is also involved in the response to replication stress by mediating dephosphorylation of POLR2A at 'Ser-5' of the CTD, promoting RNA polymerase II degradation. The PNUTS-PP1 complex also plays a role in the control of chromatin structure and cell cycle progression during the transition from mitosis into interphase. PNUTS-PP1 complex mediates dephosphorylation of MYC, promoting MYC stability by preventing MYC ubiquitination by the SCF(FBXW7) complex. In addition to acts as a substrate-recognition component, PPP1R10/PNUTS also acts as a nuclear targeting subunit for the PNUTS-PP1 complex. In some context, PPP1R10/PNUTS also acts as an inhibitor of protein phosphatase 1 (PP1) activity by preventing access to substrates, such as RB. The protein is Serine/threonine-protein phosphatase 1 regulatory subunit 10 (PPP1R10) of Sus scrofa (Pig).